A 174-amino-acid chain; its full sequence is tRNA (cytidine(56)-2'-O)-methyltransferase (174 aa).

Residues Leu80, 105–109, and 123–130 contribute to the S-adenosyl-L-methionine site; these read GAEKV and ISNQPHSE.

This sequence belongs to the aTrm56 family. Homodimer.

The protein resides in the cytoplasm. It carries out the reaction cytidine(56) in tRNA + S-adenosyl-L-methionine = 2'-O-methylcytidine(56) in tRNA + S-adenosyl-L-homocysteine + H(+). In terms of biological role, specifically catalyzes the AdoMet-dependent 2'-O-ribose methylation of cytidine at position 56 in tRNAs. The protein is tRNA (cytidine(56)-2'-O)-methyltransferase of Metallosphaera sedula (strain ATCC 51363 / DSM 5348 / JCM 9185 / NBRC 15509 / TH2).